Consider the following 144-residue polypeptide: Large ribosomal subunit protein uL15 (144 aa).

Positions 1–52 (MRLNTLSPAEGAKHAPKRVGRGIGSGLGKTAGRGHKGQNSRSGGGVRRGFEG) are disordered. Residues 21-31 (RGIGSGLGKTA) are compositionally biased toward gly residues.

It belongs to the universal ribosomal protein uL15 family. Part of the 50S ribosomal subunit.

Its function is as follows. Binds to the 23S rRNA. This Yersinia pseudotuberculosis serotype O:1b (strain IP 31758) protein is Large ribosomal subunit protein uL15.